A 249-amino-acid chain; its full sequence is Ubiquinone biosynthesis O-methyltransferase (249 aa).

S-adenosyl-L-methionine is bound by residues Arg-44, Gly-75, Asp-96, and Met-138.

It belongs to the methyltransferase superfamily. UbiG/COQ3 family.

The enzyme catalyses a 3-demethylubiquinol + S-adenosyl-L-methionine = a ubiquinol + S-adenosyl-L-homocysteine + H(+). It catalyses the reaction a 3-(all-trans-polyprenyl)benzene-1,2-diol + S-adenosyl-L-methionine = a 2-methoxy-6-(all-trans-polyprenyl)phenol + S-adenosyl-L-homocysteine + H(+). Its pathway is cofactor biosynthesis; ubiquinone biosynthesis. Its function is as follows. O-methyltransferase that catalyzes the 2 O-methylation steps in the ubiquinone biosynthetic pathway. The protein is Ubiquinone biosynthesis O-methyltransferase of Paramagnetospirillum magneticum (strain ATCC 700264 / AMB-1) (Magnetospirillum magneticum).